Here is an 87-residue protein sequence, read N- to C-terminus: Cytochrome c oxidase assembly factor 3, mitochondrial (87 aa).

The chain crosses the membrane as a helical span at residues 47–69; it reads NNLLTAGALGVSVLAIYGYSIFS.

The protein belongs to the COA3 family.

It is found in the mitochondrion membrane. In terms of biological role, plays a critical role in the biogenesis and activity of cytochrome c oxidase (COX) (complex IV). The sequence is that of Cytochrome c oxidase assembly factor 3, mitochondrial (Ccdc56) from Drosophila melanogaster (Fruit fly).